A 199-amino-acid polypeptide reads, in one-letter code: Recombination protein RecR (199 aa).

Residues 58–73 (CVNCGNIGTGDLCEIC) form a C4-type zinc finger. One can recognise a Toprim domain in the interval 81–176 (GEICVVEDVA…TLSSLAQGVP (96 aa)).

The protein belongs to the RecR family.

Its function is as follows. May play a role in DNA repair. It seems to be involved in an RecBC-independent recombinational process of DNA repair. It may act with RecF and RecO. The chain is Recombination protein RecR from Jannaschia sp. (strain CCS1).